Here is a 473-residue protein sequence, read N- to C-terminus: MKHTIIENEPEIKLQNDLNHHIEISPNTKTTNGTTTTTTTLNVNKTLKAIDLIETSIKNHISTIDHENCLPNDEDSFFVCDLGEIINSVNQWQQILPMVQPYYAVKCNSNPQILTTLSELGVNFDCASKNEIDLVLSLGIHQAHERIIYANPCKTNSFIRHAADENVNLTTVDNVHELYKLAKFHPHCKILIRLITDDSTAQCQLSTKFGCDLNTAIGEILPKAKELGLQVHGVAFHVGSGAKDFSSIYQAIKDSRILFDEMLSMGFTPKLLDIGGGFERETFPQSSQMVKFALEKFFPIEFSQLNEIKFIAEPGRFMVANAFTLITHIIARRDLPTGGNNNNNDMTPSAMLYINDGVYGNLNCILFDHQTPKVYVLTNENQLFYKQEMMRSLSVNNNNNNNNKTDGFKFSIWGPTCDGLDCVSSLAKLSKNVQVGDWLFFENVGAYTSCASTKFNGLSSGETKTLYVNSNEE.

K106 is subject to N6-(pyridoxal phosphate)lysine. Residues S240, G277, and 313–316 (EPGR) each bind pyridoxal 5'-phosphate. 367-368 (FD) serves as a coordination point for substrate. C417 serves as the catalytic Proton donor; shared with dimeric partner. Substrate is bound at residue D418. Y447 contacts pyridoxal 5'-phosphate.

Belongs to the Orn/Lys/Arg decarboxylase class-II family. As to quaternary structure, homodimer. Only the dimer is catalytically active, as the active sites are constructed of residues from both monomers. Pyridoxal 5'-phosphate serves as cofactor.

Its subcellular location is the cytoplasm. It carries out the reaction L-ornithine + H(+) = putrescine + CO2. The protein operates within amine and polyamine biosynthesis; putrescine biosynthesis via L-ornithine pathway; putrescine from L-ornithine: step 1/1. Inhibited by antizyme (AZ) OAZ1 in response to polyamine levels. AZ inhibits the assembly of the functional homodimer by binding to ODC monomers and targeting them for ubiquitin-independent proteolytic destruction by the 26S proteasome. Functionally, catalyzes the first and rate-limiting step of polyamine biosynthesis that converts ornithine into putrescine, which is the precursor for the polyamines, spermidine and spermine. Polyamines are essential for cell proliferation and are implicated in cellular processes, ranging from DNA replication to apoptosis. The sequence is that of Ornithine decarboxylase (SPE1) from Candida albicans (strain SC5314 / ATCC MYA-2876) (Yeast).